A 310-amino-acid polypeptide reads, in one-letter code: MRKDRQNKITEVGIYLKGLQNRLCRAFEKEEGESRFQETLWEKPNGGGGRTRLLTEGHVIEQGGVNFSCVYGNQLPPAATQKHPEISGFAFQAEGLSLVIHPRNPYVPTVHANFRFFIAGKDEADPRWWFGGGYDLTPYYGFEEDCRHWHRVAKKACDRFGEAIYPRFKAACDDYFYLKHRNEPRGIGGLFFDDLNEWEFKRCFEFIKILGDSFLEAYLPIMQNRKNHPYGERQREFQLYRRGRYVEFNLLYDRGTRFGLEFGGRTESILMSLPPRVVWRPNWEPEPGSEEARLYEDYLVRRNWVSVSGA.

Ser-97 is a substrate binding site. His-101 and His-111 together coordinate a divalent metal cation. Residue His-111 is the Proton donor of the active site. Position 113 to 115 (Asn-113 to Arg-115) interacts with substrate. A divalent metal cation is bound by residues His-150 and His-180. The interval Tyr-245 to Arg-280 is important for dimerization. Gly-263 to Arg-265 is a binding site for substrate.

The protein belongs to the aerobic coproporphyrinogen-III oxidase family. In terms of assembly, homodimer. It depends on a divalent metal cation as a cofactor.

Its subcellular location is the cytoplasm. It catalyses the reaction coproporphyrinogen III + O2 + 2 H(+) = protoporphyrinogen IX + 2 CO2 + 2 H2O. Its pathway is porphyrin-containing compound metabolism; protoporphyrin-IX biosynthesis; protoporphyrinogen-IX from coproporphyrinogen-III (O2 route): step 1/1. Its function is as follows. Involved in the heme biosynthesis. Catalyzes the aerobic oxidative decarboxylation of propionate groups of rings A and B of coproporphyrinogen-III to yield the vinyl groups in protoporphyrinogen-IX. The sequence is that of Oxygen-dependent coproporphyrinogen-III oxidase from Coxiella burnetii (strain RSA 331 / Henzerling II).